Reading from the N-terminus, the 472-residue chain is Poly(A) polymerase catalytic subunit (472 aa).

Residues Asp-194 and Asp-196 contribute to the active site.

Belongs to the poxviridae poly(A) polymerase catalytic subunit family. As to quaternary structure, heterodimer of a large (catalytic) subunit and a small (regulatory) subunit.

It carries out the reaction RNA(n) + ATP = RNA(n)-3'-adenine ribonucleotide + diphosphate. In terms of biological role, polymerase that creates the 3'-poly(A) tail of mRNA's. This chain is Poly(A) polymerase catalytic subunit (PAPL), found in Fowlpox virus (strain NVSL) (FPV).